Here is a 199-residue protein sequence, read N- to C-terminus: 3-isopropylmalate dehydratase small subunit (199 aa).

Belongs to the LeuD family. LeuD type 1 subfamily. As to quaternary structure, heterodimer of LeuC and LeuD.

It catalyses the reaction (2R,3S)-3-isopropylmalate = (2S)-2-isopropylmalate. The protein operates within amino-acid biosynthesis; L-leucine biosynthesis; L-leucine from 3-methyl-2-oxobutanoate: step 2/4. Catalyzes the isomerization between 2-isopropylmalate and 3-isopropylmalate, via the formation of 2-isopropylmaleate. The chain is 3-isopropylmalate dehydratase small subunit from Kocuria rhizophila (strain ATCC 9341 / DSM 348 / NBRC 103217 / DC2201).